The sequence spans 83 residues: MDLSSLLSQIPQDTLLVLLAYTVLGGLYLVVVPLALYAWMNQRWHRMGKLERLGIYGMVFFFFPGMILFAPFLNFRLSGQGDV.

The next 2 helical transmembrane spans lie at 15-35 (LLVL…VPLA) and 53-73 (LGIY…APFL).

Belongs to the complex I NdhL subunit family. NDH-1 can be composed of about 15 different subunits; different subcomplexes with different compositions have been identified which probably have different functions.

It localises to the cellular thylakoid membrane. The enzyme catalyses a plastoquinone + NADH + (n+1) H(+)(in) = a plastoquinol + NAD(+) + n H(+)(out). It carries out the reaction a plastoquinone + NADPH + (n+1) H(+)(in) = a plastoquinol + NADP(+) + n H(+)(out). In terms of biological role, NDH-1 shuttles electrons from an unknown electron donor, via FMN and iron-sulfur (Fe-S) centers, to quinones in the respiratory and/or the photosynthetic chain. The immediate electron acceptor for the enzyme in this species is believed to be plastoquinone. Couples the redox reaction to proton translocation, and thus conserves the redox energy in a proton gradient. Cyanobacterial NDH-1 also plays a role in inorganic carbon-concentration. This chain is NAD(P)H-quinone oxidoreductase subunit L, found in Synechococcus sp. (strain CC9605).